A 111-amino-acid polypeptide reads, in one-letter code: Large ribosomal subunit protein P2B (111 aa).

The segment at 62–111 (LASVPSGGAAAGGASASTGAAAGGAAEAEEEKEEEAKEESDDDMGFGLFD) is disordered. Residues 67–87 (SGGAAAGGASASTGAAAGGAA) show a composition bias toward low complexity. The span at 88 to 105 (EAEEEKEEEAKEESDDDM) shows a compositional bias: acidic residues. Serine 101 carries the post-translational modification Phosphoserine.

It belongs to the eukaryotic ribosomal protein P1/P2 family.

Its function is as follows. Plays an important role in the elongation step of protein synthesis. The chain is Large ribosomal subunit protein P2B (RPP2B) from Candida albicans (Yeast).